Reading from the N-terminus, the 545-residue chain is MNMAKDIKFSADARAAMVRGVDMLADTVKVTLGPKGRNVVLEKAFGSPLITNDGVTIAKEIELEDHFENMGAKLVSEVASKTNDIAGDGTTTATVLTQAIVHEGLKNVTAGANPIGIRRGIETATATAVEALKAIAQPVSGKEAIAQVAAVSSRSEKVGEYISEAMERVGNDGVITIEESRGMETELEVVEGMQFDRGYLSQYMVTDNEKMVADLENPFILITDKKVSNIQDILPLLEEVLKTNRPLLIIADDVDGEALPTLVLNKIRGTFNVVAVKAPGFGDRRKAMLEDIAILTGGTVITEDLGLELKDATMTALGQAAKITVDKDSTVIVEGSGSSEAIANRIALIKSQLETTTSDFDREKLQERLAKLAGGVAVIKVGAPTETALKEMKLRIEDALNATRAAVEEGIVAGGGTALITVIEKVAALELEGDDATGRNIVLRALEEPVRQIALNAGYEGSVVIDKLKNSPAGTGFNAATGEWVDMIKTGIIDPVKVTRSALQNAASVASLILTTEAVVANKPEPAAPAPAMPAGMDPGMMGGF.

ATP-binding positions include 31–34 (TLGP), 88–92 (DGTTT), glycine 415, 478–480 (NAA), and aspartate 494.

It belongs to the chaperonin (HSP60) family. As to quaternary structure, forms a cylinder of 14 subunits composed of two heptameric rings stacked back-to-back. Interacts with the co-chaperonin GroES.

It localises to the cytoplasm. It carries out the reaction ATP + H2O + a folded polypeptide = ADP + phosphate + an unfolded polypeptide.. Its function is as follows. Together with its co-chaperonin GroES, plays an essential role in assisting protein folding. The GroEL-GroES system forms a nano-cage that allows encapsulation of the non-native substrate proteins and provides a physical environment optimized to promote and accelerate protein folding. The protein is Chaperonin GroEL of Streptococcus pyogenes serotype M4 (strain MGAS10750).